The chain runs to 500 residues: UPF0371 protein SZO_06760 (500 aa).

This sequence belongs to the UPF0371 family.

This is UPF0371 protein SZO_06760 from Streptococcus equi subsp. zooepidemicus (strain H70).